Here is a 546-residue protein sequence, read N- to C-terminus: Probable protein kinase UbiB (546 aa).

The region spanning 124-502 is the Protein kinase domain; the sequence is DFDIKPLASA…RVRQGQSRYL (379 aa). ATP is bound by residues 130-138 and lysine 153; that span reads LASASIAQV. Aspartate 288 serves as the catalytic Proton acceptor. The next 2 helical transmembrane spans lie at 501–521 and 522–542; these read YLFGIGATLLLSGTLLLINRP and DWQMMPAWLMAGGLVVWLIGW.

This sequence belongs to the ABC1 family. UbiB subfamily.

It is found in the cell inner membrane. Its pathway is cofactor biosynthesis; ubiquinone biosynthesis [regulation]. Its function is as follows. Is probably a protein kinase regulator of UbiI activity which is involved in aerobic coenzyme Q (ubiquinone) biosynthesis. The chain is Probable protein kinase UbiB from Enterobacter sp. (strain 638).